The sequence spans 156 residues: SCP2 sterol-binding domain-containing protein 1 (156 aa).

The SCP2 domain occupies threonine 44 to tryptophan 156.

In Bos taurus (Bovine), this protein is SCP2 sterol-binding domain-containing protein 1 (SCP2D1).